The chain runs to 351 residues: MKGFAMLGINKLGWIEKERPVAGSYDAIVRPLAVSPCTSDIHTVFEGALGDRKNMILGHEAVGEVVEVGSEVKDFKPGDRVIVPCTTPDWRSLEVQAGFQQHSNGMLAGWKFSNFKDGVFGEYFHVNDADMNLAILPKDMPLENAVMITDMMTTGFHGAELADIQMGSSVVVIGIGAVGLMGIAGAKLRGAGRIIGVGSRPICVEAAKFYGATDILNYKNGHIVDQVMKLTNGKGVDRVIMAGGGSETLSQAVSMVKPGGIISNINYHGSGDALLIPRVEWGCGMAHKTIKGGLCPGGRLRAEMLRDMVVYNRVDLSKLVTHVYHGFDHIEEALLLMKDKPKDLIKAVVIL.

Zn(2+) is bound by residues cysteine 37, histidine 59, glutamate 60, and aspartate 150. Residues 175–178, 198–200, tyrosine 218, 265–267, and lysine 340 contribute to the NADP(+) site; these read IGAV, GSR, and INY.

It belongs to the zinc-containing alcohol dehydrogenase family. In terms of assembly, homotetramer. Zn(2+) is required as a cofactor.

The enzyme catalyses propan-2-ol + NADP(+) = acetone + NADPH + H(+). In terms of biological role, alcohol dehydrogenase with a preference for medium chain secondary alcohols, such as 2-butanol and isopropanol. Has very low activity with primary alcohols, such as ethanol. Under physiological conditions, the enzyme reduces aldehydes and 2-ketones to produce secondary alcohols. Is active with acetaldehyde and propionaldehyde. The protein is NADP-dependent isopropanol dehydrogenase (adh) of Clostridium beijerinckii (Clostridium MP).